A 430-amino-acid chain; its full sequence is Adenylosuccinate synthetase (430 aa).

Residues 12–18 (GDEGKGK) and 40–42 (GHT) contribute to the GTP site. D13 functions as the Proton acceptor in the catalytic mechanism. 2 residues coordinate Mg(2+): D13 and G40. IMP is bound by residues 13–16 (DEGK), 38–41 (NAGH), T128, R142, Q223, T238, and R302. H41 (proton donor) is an active-site residue. 298-304 (TTTGRPR) is a substrate binding site. Residues R304, 330–332 (SID), and 412–414 (SVG) each bind GTP.

It belongs to the adenylosuccinate synthetase family. Homodimer. Mg(2+) is required as a cofactor.

The protein localises to the cytoplasm. It carries out the reaction IMP + L-aspartate + GTP = N(6)-(1,2-dicarboxyethyl)-AMP + GDP + phosphate + 2 H(+). It functions in the pathway purine metabolism; AMP biosynthesis via de novo pathway; AMP from IMP: step 1/2. In terms of biological role, plays an important role in the de novo pathway of purine nucleotide biosynthesis. Catalyzes the first committed step in the biosynthesis of AMP from IMP. The protein is Adenylosuccinate synthetase of Streptococcus sanguinis (strain SK36).